The primary structure comprises 118 residues: Small ribosomal subunit protein uS13 (118 aa).

The tract at residues 94–118 is disordered; the sequence is SLPLRGQRTKTNARTRKGPRKPIRK.

It belongs to the universal ribosomal protein uS13 family. Part of the 30S ribosomal subunit. Forms a loose heterodimer with protein S19. Forms two bridges to the 50S subunit in the 70S ribosome.

Functionally, located at the top of the head of the 30S subunit, it contacts several helices of the 16S rRNA. In the 70S ribosome it contacts the 23S rRNA (bridge B1a) and protein L5 of the 50S subunit (bridge B1b), connecting the 2 subunits; these bridges are implicated in subunit movement. Contacts the tRNAs in the A and P-sites. The polypeptide is Small ribosomal subunit protein uS13 (Shewanella baltica (strain OS223)).